A 420-amino-acid polypeptide reads, in one-letter code: Glucose-1-phosphate adenylyltransferase (420 aa).

Alpha-D-glucose 1-phosphate is bound by residues Y107, G173, 188 to 189, and S206; that span reads EK.

It belongs to the bacterial/plant glucose-1-phosphate adenylyltransferase family. Homotetramer.

It carries out the reaction alpha-D-glucose 1-phosphate + ATP + H(+) = ADP-alpha-D-glucose + diphosphate. Its pathway is glycan biosynthesis; glycogen biosynthesis. Involved in the biosynthesis of ADP-glucose, a building block required for the elongation reactions to produce glycogen. Catalyzes the reaction between ATP and alpha-D-glucose 1-phosphate (G1P) to produce pyrophosphate and ADP-Glc. This Shewanella oneidensis (strain ATCC 700550 / JCM 31522 / CIP 106686 / LMG 19005 / NCIMB 14063 / MR-1) protein is Glucose-1-phosphate adenylyltransferase.